Reading from the N-terminus, the 226-residue chain is ATP synthase F(0) complex subunit a (226 aa).

Transmembrane regions (helical) follow at residues 6–26, 68–88, 97–117, 138–158, 164–184, and 193–213; these read FATF…IMLF, WALM…LGLL, QLSM…LMGF, VPML…ALAV, ITAG…LCSI, and FIIL…QAYV.

The protein belongs to the ATPase A chain family. As to quaternary structure, component of the ATP synthase complex composed at least of ATP5F1A/subunit alpha, ATP5F1B/subunit beta, ATP5MC1/subunit c (homooctomer), MT-ATP6/subunit a, MT-ATP8/subunit 8, ATP5ME/subunit e, ATP5MF/subunit f, ATP5MG/subunit g, ATP5MK/subunit k, ATP5MJ/subunit j, ATP5F1C/subunit gamma, ATP5F1D/subunit delta, ATP5F1E/subunit epsilon, ATP5PF/subunit F6, ATP5PB/subunit b, ATP5PD/subunit d, ATP5PO/subunit OSCP. ATP synthase complex consists of a soluble F(1) head domain (subunits alpha(3) and beta(3)) - the catalytic core - and a membrane F(0) domain - the membrane proton channel (subunits c, a, 8, e, f, g, k and j). These two domains are linked by a central stalk (subunits gamma, delta, and epsilon) rotating inside the F1 region and a stationary peripheral stalk (subunits F6, b, d, and OSCP). Interacts with DNAJC30; interaction is direct.

The protein localises to the mitochondrion inner membrane. The catalysed reaction is H(+)(in) = H(+)(out). Its function is as follows. Subunit a, of the mitochondrial membrane ATP synthase complex (F(1)F(0) ATP synthase or Complex V) that produces ATP from ADP in the presence of a proton gradient across the membrane which is generated by electron transport complexes of the respiratory chain. ATP synthase complex consist of a soluble F(1) head domain - the catalytic core - and a membrane F(1) domain - the membrane proton channel. These two domains are linked by a central stalk rotating inside the F(1) region and a stationary peripheral stalk. During catalysis, ATP synthesis in the catalytic domain of F(1) is coupled via a rotary mechanism of the central stalk subunits to proton translocation. With the subunit c (ATP5MC1), forms the proton-conducting channel in the F(0) domain, that contains two crucial half-channels (inlet and outlet) that facilitate proton movement from the mitochondrial intermembrane space (IMS) into the matrix. Protons are taken up via the inlet half-channel and released through the outlet half-channel, following a Grotthuss mechanism. In Osphranter robustus (Wallaroo), this protein is ATP synthase F(0) complex subunit a.